Here is a 415-residue protein sequence, read N- to C-terminus: Type II methyltransferase M.DdeI (415 aa).

Residues 1–373 enclose the SAM-dependent MTase C5-type domain; that stretch reads MNIIDLFAGC…ERISWYFENI (373 aa). The active site involves C76.

The protein belongs to the class I-like SAM-binding methyltransferase superfamily. C5-methyltransferase family.

The catalysed reaction is a 2'-deoxycytidine in DNA + S-adenosyl-L-methionine = a 5-methyl-2'-deoxycytidine in DNA + S-adenosyl-L-homocysteine + H(+). Functionally, a methylase that recognizes the double-stranded sequence 5'-CTNAG-3', methylates C-1 on both strands, and protects the DNA from cleavage by the DdeI endonuclease. This chain is Type II methyltransferase M.DdeI (ddeIM), found in Desulfomicrobium norvegicum (strain DSM 1741 / NCIMB 8310) (Desulfovibrio baculatus (strain Norway 4)).